Here is a 336-residue protein sequence, read N- to C-terminus: Holliday junction branch migration complex subunit RuvB (336 aa).

Residues 4-184 (SDRLISSQSI…FGIVQRLEYY (181 aa)) are large ATPase domain (RuvB-L). Residues isoleucine 23, arginine 24, glycine 65, lysine 68, threonine 69, threonine 70, 131-133 (EDY), arginine 174, tyrosine 184, and arginine 221 each bind ATP. Threonine 69 lines the Mg(2+) pocket. Residues 185-255 (SVDSLTQIVA…MAQQALEMLE (71 aa)) are small ATPAse domain (RuvB-S). A head domain (RuvB-H) region spans residues 258–336 (QHGFDLMDRK…HFGFSAIEQE (79 aa)). DNA contacts are provided by arginine 313 and arginine 318.

Belongs to the RuvB family. Homohexamer. Forms an RuvA(8)-RuvB(12)-Holliday junction (HJ) complex. HJ DNA is sandwiched between 2 RuvA tetramers; dsDNA enters through RuvA and exits via RuvB. An RuvB hexamer assembles on each DNA strand where it exits the tetramer. Each RuvB hexamer is contacted by two RuvA subunits (via domain III) on 2 adjacent RuvB subunits; this complex drives branch migration. In the full resolvosome a probable DNA-RuvA(4)-RuvB(12)-RuvC(2) complex forms which resolves the HJ.

Its subcellular location is the cytoplasm. It carries out the reaction ATP + H2O = ADP + phosphate + H(+). In terms of biological role, the RuvA-RuvB-RuvC complex processes Holliday junction (HJ) DNA during genetic recombination and DNA repair, while the RuvA-RuvB complex plays an important role in the rescue of blocked DNA replication forks via replication fork reversal (RFR). RuvA specifically binds to HJ cruciform DNA, conferring on it an open structure. The RuvB hexamer acts as an ATP-dependent pump, pulling dsDNA into and through the RuvAB complex. RuvB forms 2 homohexamers on either side of HJ DNA bound by 1 or 2 RuvA tetramers; 4 subunits per hexamer contact DNA at a time. Coordinated motions by a converter formed by DNA-disengaged RuvB subunits stimulates ATP hydrolysis and nucleotide exchange. Immobilization of the converter enables RuvB to convert the ATP-contained energy into a lever motion, pulling 2 nucleotides of DNA out of the RuvA tetramer per ATP hydrolyzed, thus driving DNA branch migration. The RuvB motors rotate together with the DNA substrate, which together with the progressing nucleotide cycle form the mechanistic basis for DNA recombination by continuous HJ branch migration. Branch migration allows RuvC to scan DNA until it finds its consensus sequence, where it cleaves and resolves cruciform DNA. The sequence is that of Holliday junction branch migration complex subunit RuvB from Legionella pneumophila subsp. pneumophila (strain Philadelphia 1 / ATCC 33152 / DSM 7513).